Here is a 764-residue protein sequence, read N- to C-terminus: Putative wall-associated receptor kinase-like 13 (764 aa).

The N-terminal stretch at 1–26 (MRGNKNYYFLSLLYFLSLPILHFSSC) is a signal peptide. Residues 27 to 379 (THKCGDIQIP…HRCIDYHIPE (353 aa)) lie on the Extracellular side of the membrane. 8 N-linked (GlcNAc...) asparagine glycosylation sites follow: Asn-78, Asn-114, Asn-121, Asn-164, Asn-233, Asn-238, Asn-259, and Asn-283. Residues 308–372 (CTCDNHIASG…CINTSGGHRC (65 aa)) form an atypical EGF-like region. Intrachain disulfides connect Cys-310–Cys-323, Cys-345–Cys-363, and Cys-352–Cys-372. N-linked (GlcNAc...) asparagine glycosylation occurs at Asn-365. A helical membrane pass occupies residues 380–400 (VMLGLGAGFFVLIVGGGIWWW). The Cytoplasmic segment spans residues 401–764 (RKLLRKRRMT…SGSTEIARSM (364 aa)). The 275-residue stretch at 454-728 (FNDNRVIGQG…REVSTALERI (275 aa)) folds into the Protein kinase domain. ATP contacts are provided by residues 460-468 (IGQGGQGTV) and Lys-482. Position 527 is a phosphotyrosine (Tyr-527). Asp-579 functions as the Proton acceptor in the catalytic mechanism. Phosphothreonine occurs at positions 613 and 618. Tyr-626 bears the Phosphotyrosine mark.

The protein belongs to the protein kinase superfamily. Ser/Thr protein kinase family.

The protein resides in the membrane. The enzyme catalyses L-seryl-[protein] + ATP = O-phospho-L-seryl-[protein] + ADP + H(+). It carries out the reaction L-threonyl-[protein] + ATP = O-phospho-L-threonyl-[protein] + ADP + H(+). In terms of biological role, putative serine/threonine-protein kinase that may function as a signaling receptor of extracellular matrix component. This Arabidopsis thaliana (Mouse-ear cress) protein is Putative wall-associated receptor kinase-like 13 (WAKL13).